Consider the following 353-residue polypeptide: Mitogen-activated protein kinase mpkB (353 aa).

The 289-residue stretch at 21-309 (YEIQDVIGEG…VEEALRHPYL (289 aa)) folds into the Protein kinase domain. ATP contacts are provided by residues 27–35 (IGEGAYGVV) and Lys-50. Asp-145 acts as the Proton acceptor in catalysis.

Belongs to the protein kinase superfamily. Ser/Thr protein kinase family. MAP kinase subfamily. Mg(2+) is required as a cofactor.

Its subcellular location is the nucleus. It carries out the reaction L-seryl-[protein] + ATP = O-phospho-L-seryl-[protein] + ADP + H(+). It catalyses the reaction L-threonyl-[protein] + ATP = O-phospho-L-threonyl-[protein] + ADP + H(+). Activated by threonine and tyrosine phosphorylation. Its function is as follows. Mitogen-activated protein kinase (MAPK) that plays a role in conidiation and regulation of secondary metabolite biosynthesis. Acts as a repressor of dihydroxynaphthalene (DHN)-melanin production. The protein is Mitogen-activated protein kinase mpkB of Aspergillus fumigatus (strain CBS 144.89 / FGSC A1163 / CEA10) (Neosartorya fumigata).